The chain runs to 78 residues: MAKVCQVTGKRPVTGHNVSHAKNHTKRRFLPNLHTHRFWVESEKRFVKLRVSSKGMRIIDKNGIETVLSDIRARGEKI.

Residues 1-22 are disordered; sequence MAKVCQVTGKRPVTGHNVSHAK.

It belongs to the bacterial ribosomal protein bL28 family.

The chain is Large ribosomal subunit protein bL28 from Teredinibacter turnerae (strain ATCC 39867 / T7901).